Reading from the N-terminus, the 226-residue chain is Cobalt transport protein CbiM 1 (226 aa).

6 helical membrane passes run 6–26, 43–63, 75–95, 107–127, 135–155, and 181–201; these read GFLPVEHAIGWSVASAPVVAY, MLLGVAAAFTFVLSALKMPSV, LGAILFGPSAVAPIGAVVLLF, TLGANIFSMAIVGPFAAAAVF, FPFGVGVFLAASLGDLLTYVT, and VFALTQIPLAISEGLLTVVVM.

The protein belongs to the CbiM family. In terms of assembly, forms an energy-coupling factor (ECF) transporter complex composed of an ATP-binding protein (A component, CbiO), a transmembrane protein (T component, CbiQ) and 2 possible substrate-capture proteins (S components, CbiM and CbiN) of unknown stoichimetry.

It is found in the cell inner membrane. It participates in cofactor biosynthesis; adenosylcobalamin biosynthesis. Part of the energy-coupling factor (ECF) transporter complex CbiMNOQ involved in cobalt import. This chain is Cobalt transport protein CbiM 1 (cbim1), found in Pelobacter propionicus (strain DSM 2379 / NBRC 103807 / OttBd1).